The following is a 185-amino-acid chain: TRAF-interacting protein with FHA domain-containing protein A (185 aa).

Residue T9 is modified to Phosphothreonine. One can recognise an FHA domain in the interval 48 to 104; sequence VKFGRNSNMCQYTFQDKQVSRVQFALQPFKQFNSSVLSFEIKNMSKKTSLMVDNQEL.

This sequence belongs to the TIFA family. Homooligomer; homooligomerizes following phosphorylation at Thr-9. Interacts with IRAK1, TRAF2 and TRAF6. Interacts with TIFAB; binding to TIFAB inhibits TRAF6 activation, possibly by inducing a conformational change in TIFA. Interacts with ZCCHC11; binding to ZCCHC11 suppresses the TRAF6-dependent activation of NF-kappa-B. Phosphorylated at Thr-9 following detection of ADP-D-glycero-beta-D-manno-heptose (ADP-Heptose) by ALPK1. Phosphorylation at Thr-9 by ALPK1 leads to the formation of an intermolecular binding between the FHA domain and phosphorylated Thr-9, promoting TIFA oligomerization and TIFA-mediated NF-kappa-B activation.

It localises to the cytoplasm. In terms of biological role, adapter molecule that plays a key role in the activation of pro-inflammatory NF-kappa-B signaling following detection of bacterial pathogen-associated molecular pattern metabolites (PAMPs). Promotes activation of an innate immune response by inducing the oligomerization and polyubiquitination of TRAF6, which leads to the activation of TAK1 and IKK through a proteasome-independent mechanism. TIFA-dependent innate immune response is triggered by ADP-D-glycero-beta-D-manno-heptose (ADP-Heptose), a potent PAMP present in all Gram-negative and some Gram-positive bacteria: ADP-Heptose is recognized by ALPK1, which phosphorylates TIFA at Thr-9, leading to TIFA homooligomerization and subsequent activation of pro-inflammatory NF-kappa-B signaling. This chain is TRAF-interacting protein with FHA domain-containing protein A, found in Rattus norvegicus (Rat).